We begin with the raw amino-acid sequence, 295 residues long: Large ribosomal subunit protein uL18 (295 aa).

Basic and acidic residues predominate over residues 251–261; sequence PTPKKKTDFAG. The segment at 251 to 295 is disordered; the sequence is PTPKKKTDFAGKTKRWNRKKMTFSQRRDRVKQKKASFLRAKQQEG. Positions 262–271 are enriched in basic residues; the sequence is KTKRWNRKKM.

Belongs to the universal ribosomal protein uL18 family. As to quaternary structure, component of the large ribosomal subunit (LSU).

The protein localises to the cytoplasm. It localises to the nucleus. In terms of biological role, component of the ribosome, a large ribonucleoprotein complex responsible for the synthesis of proteins in the cell. The small ribosomal subunit (SSU) binds messenger RNAs (mRNAs) and translates the encoded message by selecting cognate aminoacyl-transfer RNA (tRNA) molecules. The large subunit (LSU) contains the ribosomal catalytic site termed the peptidyl transferase center (PTC), which catalyzes the formation of peptide bonds, thereby polymerizing the amino acids delivered by tRNAs into a polypeptide chain. The nascent polypeptides leave the ribosome through a tunnel in the LSU and interact with protein factors that function in enzymatic processing, targeting, and the membrane insertion of nascent chains at the exit of the ribosomal tunnel. The polypeptide is Large ribosomal subunit protein uL18 (RPL5) (Styela clava (Sea squirt)).